The following is a 117-amino-acid chain: Transcription elongation factor A protein-like 8 (117 aa).

Composition is skewed to basic and acidic residues over residues 1–24 and 61–74; these read MQKSCGENERKPQNMPKAEEDRPL and YKEDSPVRHLDPEE. The interval 1–74 is disordered; that stretch reads MQKSCGENER…SPVRHLDPEE (74 aa). The stretch at 73 to 100 forms a coiled coil; that stretch reads EEMIRGADELERLREEIRRVRNKFVMMH.

Belongs to the TFS-II family. TFA subfamily.

It localises to the nucleus. In terms of biological role, may be involved in transcriptional regulation. This chain is Transcription elongation factor A protein-like 8 (TCEAL8), found in Bos taurus (Bovine).